The sequence spans 488 residues: Cruciferin (488 aa).

A signal peptide spans 1–23; it reads MARLSSLLSFSLALLTFLHGSTA. 2 cysteine pairs are disulfide-bonded: C30–C63 and C105–C305. 2 Cupin type-1 domains span residues 35 to 262 and 311 to 460; these read LNAL…RTAQ and DNLD…EEAR. The segment at 116–163 is disordered; the sequence is QPSGGSPFGEGQGQGQQGQGQGHQGQGQGQQGQQGQQGQQSQGQGFRD. Residues 121 to 147 show a composition bias toward gly residues; it reads SPFGEGQGQGQQGQGQGHQGQGQGQQG. Low complexity predominate over residues 148–160; the sequence is QQGQQGQQSQGQG.

This sequence belongs to the 11S seed storage protein (globulins) family. As to quaternary structure, hexamer; each subunit is composed of an acidic and a basic chain derived from a single precursor and linked by a disulfide bond.

The protein localises to the rough endoplasmic reticulum. This is a seed storage protein. This chain is Cruciferin (CRUA), found in Brassica napus (Rape).